We begin with the raw amino-acid sequence, 237 residues long: 3-oxoacyl-[acyl-carrier-protein] reductase (237 aa).

Position 1 is an N-acetylmethionine (Met1). Residues 11–14 (SRGI) and 34–35 (RN) contribute to the NADP(+) site. Lys40 bears the N6-acetyllysine mark. NADP(+)-binding positions include Asp56 and 83-85 (AAG). At Lys96 the chain carries N6-acetyllysine. Ser135 serves as a coordination point for substrate. Residues Tyr148, Lys152, and 181-183 (VHT) each bind NADP(+). Residue Tyr148 is the Proton acceptor of the active site. The residue at position 195 (Lys195) is an N6-acetyllysine.

It belongs to the short-chain dehydrogenases/reductases (SDR) family. As to quaternary structure, homotetramer (in vitro). Heterotetramer with HSD17B8; contains two molecules each of HSD17B8 and CBR4. Does not form homotetramers when HSD17B8 is coexpressed, only heterotetramers (in vitro). As to expression, detected in liver and kidney (at protein level). Displays the highest expression in neuronal and muscle tissues.

Its subcellular location is the mitochondrion matrix. The catalysed reaction is a (3R)-hydroxyacyl-[ACP] + NADP(+) = a 3-oxoacyl-[ACP] + NADPH + H(+). It catalyses the reaction a quinone + NADPH + H(+) = a quinol + NADP(+). Its pathway is lipid metabolism; fatty acid biosynthesis. Its function is as follows. Component of the heterotetramer complex KAR (3-ketoacyl-[acyl carrier protein] reductase or 3-ketoacyl-[ACP] reductase) that forms part of the mitochondrial fatty acid synthase (mtFAS). Beta-subunit of the KAR heterotetramer complex, responsible for the 3-ketoacyl-ACP reductase activity of the mtFAS, reduces 3-oxoacyl-[ACP] to (3R)-hydroxyacyl-[ACP] in a NADPH-dependent manner with no chain length preference, thereby participating in mitochondrial fatty acid biosynthesis. The homotetramer has NADPH-dependent quinone reductase activity (in vitro), hence could play a role in protection against cytotoxicity of exogenous quinones. As a heterotetramer, it can also reduce 9,10-phenanthrenequinone, 1,4-benzoquinone and various other o-quinones and p-quinones (in vitro). The chain is 3-oxoacyl-[acyl-carrier-protein] reductase (CBR4) from Homo sapiens (Human).